Consider the following 195-residue polypeptide: ATP-dependent Clp protease proteolytic subunit (195 aa).

The Nucleophile role is filled by Ser-97. His-122 is a catalytic residue.

It belongs to the peptidase S14 family. Fourteen ClpP subunits assemble into 2 heptameric rings which stack back to back to give a disk-like structure with a central cavity, resembling the structure of eukaryotic proteasomes.

It localises to the cytoplasm. It catalyses the reaction Hydrolysis of proteins to small peptides in the presence of ATP and magnesium. alpha-casein is the usual test substrate. In the absence of ATP, only oligopeptides shorter than five residues are hydrolyzed (such as succinyl-Leu-Tyr-|-NHMec, and Leu-Tyr-Leu-|-Tyr-Trp, in which cleavage of the -Tyr-|-Leu- and -Tyr-|-Trp bonds also occurs).. In terms of biological role, cleaves peptides in various proteins in a process that requires ATP hydrolysis. Has a chymotrypsin-like activity. Plays a major role in the degradation of misfolded proteins. This chain is ATP-dependent Clp protease proteolytic subunit, found in Lactobacillus gasseri (strain ATCC 33323 / DSM 20243 / BCRC 14619 / CIP 102991 / JCM 1131 / KCTC 3163 / NCIMB 11718 / NCTC 13722 / AM63).